Here is a 122-residue protein sequence, read N- to C-terminus: Large ribosomal subunit protein uL14 (122 aa).

The protein belongs to the universal ribosomal protein uL14 family. Part of the 50S ribosomal subunit. Forms a cluster with proteins L3 and L19. In the 70S ribosome, L14 and L19 interact and together make contacts with the 16S rRNA in bridges B5 and B8.

Its function is as follows. Binds to 23S rRNA. Forms part of two intersubunit bridges in the 70S ribosome. This is Large ribosomal subunit protein uL14 from Limosilactobacillus reuteri (strain DSM 20016) (Lactobacillus reuteri).